Consider the following 405-residue polypeptide: Arginine biosynthesis bifunctional protein ArgJ (405 aa).

Positions 152, 178, 189, 276, 400, and 405 each coordinate substrate. The active-site Nucleophile is T189.

It belongs to the ArgJ family. In terms of assembly, heterotetramer of two alpha and two beta chains.

It is found in the cytoplasm. The enzyme catalyses N(2)-acetyl-L-ornithine + L-glutamate = N-acetyl-L-glutamate + L-ornithine. It catalyses the reaction L-glutamate + acetyl-CoA = N-acetyl-L-glutamate + CoA + H(+). It functions in the pathway amino-acid biosynthesis; L-arginine biosynthesis; L-ornithine and N-acetyl-L-glutamate from L-glutamate and N(2)-acetyl-L-ornithine (cyclic): step 1/1. The protein operates within amino-acid biosynthesis; L-arginine biosynthesis; N(2)-acetyl-L-ornithine from L-glutamate: step 1/4. In terms of biological role, catalyzes two activities which are involved in the cyclic version of arginine biosynthesis: the synthesis of N-acetylglutamate from glutamate and acetyl-CoA as the acetyl donor, and of ornithine by transacetylation between N(2)-acetylornithine and glutamate. This Pseudomonas fluorescens (strain ATCC BAA-477 / NRRL B-23932 / Pf-5) protein is Arginine biosynthesis bifunctional protein ArgJ.